A 362-amino-acid chain; its full sequence is Endopolygalacturonase II (362 aa).

The first 21 residues, 1–21 (MHSFASLLAYGLAASATLASA), serve as a signal peptide directing secretion. Residues 22–27 (SPIEAR) constitute a propeptide that is removed on maturation. A disulfide bond links Cys-30 and Cys-45. A PbH1 1 repeat occupies 156–186 (ADDITLTDITINNADGDTLGGHNTDAFDVGN). Asp-201 functions as the Proton donor in the catalytic mechanism. Cysteines 203 and 219 form a disulfide. The active site involves His-223. PbH1 repeat units follow at residues 238-259 (VKNVTIEHSTVSNSENAVRIKT), 267-289 (VSEITYSNIVMSGISDYGVVIQQ), and 301-322 (TNGVTITDVKLESVTGTVDSKA). Asn-240 carries an N-linked (GlcNAc...) (high mannose) asparagine glycan. 2 cysteine pairs are disulfide-bonded: Cys-329-Cys-334 and Cys-353-Cys-362.

It belongs to the glycosyl hydrolase 28 family.

Its subcellular location is the secreted. It catalyses the reaction (1,4-alpha-D-galacturonosyl)n+m + H2O = (1,4-alpha-D-galacturonosyl)n + (1,4-alpha-D-galacturonosyl)m.. Involved in maceration and soft-rotting of plant tissue. Hydrolyzes the 1,4-alpha glycosidic bonds of de-esterified pectate in the smooth region of the plant cell wall. The protein is Endopolygalacturonase II of Aspergillus niger.